The following is a 190-amino-acid chain: uncharacterized protein (190 aa).

This sequence to E.coli YdjR.

This is an uncharacterized protein from Pseudomonas putida (Arthrobacter siderocapsulatus).